A 128-amino-acid polypeptide reads, in one-letter code: uncharacterized protein (128 aa).

Residues 1 to 11 (MDNKKKEENPS) show a composition bias toward basic and acidic residues. Residues 1 to 40 (MDNKKKEENPSKSDTSISLPPSSTGEALQNYTESEWNASD) form a disordered region. Residues 12 to 37 (KSDTSISLPPSSTGEALQNYTESEWN) show a composition bias toward polar residues.

This is an uncharacterized protein from Caenorhabditis elegans.